The sequence spans 417 residues: Gamma-glutamyl phosphate reductase (417 aa).

The protein belongs to the gamma-glutamyl phosphate reductase family.

It localises to the cytoplasm. The catalysed reaction is L-glutamate 5-semialdehyde + phosphate + NADP(+) = L-glutamyl 5-phosphate + NADPH + H(+). Its pathway is amino-acid biosynthesis; L-proline biosynthesis; L-glutamate 5-semialdehyde from L-glutamate: step 2/2. Its function is as follows. Catalyzes the NADPH-dependent reduction of L-glutamate 5-phosphate into L-glutamate 5-semialdehyde and phosphate. The product spontaneously undergoes cyclization to form 1-pyrroline-5-carboxylate. The polypeptide is Gamma-glutamyl phosphate reductase (Hydrogenovibrio crunogenus (strain DSM 25203 / XCL-2) (Thiomicrospira crunogena)).